A 132-amino-acid polypeptide reads, in one-letter code: Glycine cleavage system H protein (132 aa).

Residues 24–107 (TATIGLSAFA…GEEGWLIKVR (84 aa)) form the Lipoyl-binding domain. Position 65 is an N6-lipoyllysine (lysine 65).

It belongs to the GcvH family. The glycine cleavage system is composed of four proteins: P, T, L and H. Requires (R)-lipoate as cofactor.

The glycine cleavage system catalyzes the degradation of glycine. The H protein shuttles the methylamine group of glycine from the P protein to the T protein. The polypeptide is Glycine cleavage system H protein (Synechocystis sp. (strain ATCC 27184 / PCC 6803 / Kazusa)).